A 264-amino-acid polypeptide reads, in one-letter code: Rhodanese-like domain-containing protein 4A, chloroplastic (264 aa).

The transit peptide at 1-60 (MTSLPIILASSPLRNLTKPCSTSQIPKPIQNSTKQPPIHLLTKTNLSVTISQLIITSPVL) directs the protein to the chloroplast. Residues 95-115 (FFVAGCTFTYLVVYPAVMFYL) form a helical membrane-spanning segment. The region spanning 132 to 232 (NESDSQLLDI…ARGKNGWLAI (101 aa)) is the Rhodanese domain.

It localises to the plastid. It is found in the chloroplast. The protein localises to the membrane. The protein is Rhodanese-like domain-containing protein 4A, chloroplastic (STR4A) of Arabidopsis thaliana (Mouse-ear cress).